The following is a 335-amino-acid chain: Nuclear envelope-associated protein 2 (335 aa).

Coiled coils occupy residues 55–85 and 125–260; these read RKEA…ELVA and CSVL…LKKK. Residues 239 to 260 carry the Bipartite nuclear localization signal motif; sequence KTKELESQLERQRRADQELKKK. A helical membrane pass occupies residues 312–329; that stretch reads FWDTSGFKIVVSMSMLIL.

As to quaternary structure, forms homomers and heteromers with NEAP1 and NEAP3. Interacts with SUN1 and SUN2.

It is found in the nucleus inner membrane. Its subcellular location is the nucleus. The protein localises to the nucleoplasm. The polypeptide is Nuclear envelope-associated protein 2 (Arabidopsis thaliana (Mouse-ear cress)).